The primary structure comprises 261 residues: Malonyl-[acyl-carrier protein] O-methyltransferase (261 aa).

Belongs to the methyltransferase superfamily.

The catalysed reaction is malonyl-[ACP] + S-adenosyl-L-methionine = malonyl-[ACP] methyl ester + S-adenosyl-L-homocysteine. Its pathway is cofactor biosynthesis; biotin biosynthesis. Its function is as follows. Converts the free carboxyl group of a malonyl-thioester to its methyl ester by transfer of a methyl group from S-adenosyl-L-methionine (SAM). It allows to synthesize pimeloyl-ACP via the fatty acid synthetic pathway. In Bacteroides thetaiotaomicron (strain ATCC 29148 / DSM 2079 / JCM 5827 / CCUG 10774 / NCTC 10582 / VPI-5482 / E50), this protein is Malonyl-[acyl-carrier protein] O-methyltransferase.